A 330-amino-acid chain; its full sequence is MTHILLLCGGGGTEHEVSLVSSKYIAQQLSELDAFDITHLEIKDEGWFHIESGLKYELRSDKTLLSGETVSSPVDYVVPCIHGYPGETGDIQSMLDMLSIPYLGCDAESSTNSFNKITSKLWYDALGIPNTPYLFLTENNEETHQSALAAFKQWGGLFVKAACQGSSVGCYKVTSEEELAQAINGAFGYSQQVLVEKAVKPRELEVAAYEIDGQLFTTAPGEVTAPDGAFYTYDEKYGSGSHSTTSLDAQNLTEEQVKLIDQYSRKVFTQMKLKDLSRIDFFLTDDNEIYLNEVNTFPGMTPISMFPKLLEHNGDCFKTFLQKAVLNAIK.

The 207-residue stretch at 120 to 326 (KLWYDALGIP…FKTFLQKAVL (207 aa)) folds into the ATP-grasp domain. 150 to 205 (AFKQWGGLFVKAACQGSSVGCYKVTSEEELAQAINGAFGYSQQVLVEKAVKPRELE) is a binding site for ATP. Mg(2+)-binding residues include D280, E293, and N295.

It belongs to the D-alanine--D-alanine ligase family. Mg(2+) is required as a cofactor. Mn(2+) serves as cofactor.

It is found in the cytoplasm. It carries out the reaction 2 D-alanine + ATP = D-alanyl-D-alanine + ADP + phosphate + H(+). Its pathway is cell wall biogenesis; peptidoglycan biosynthesis. Cell wall formation. In Aliivibrio fischeri (strain MJ11) (Vibrio fischeri), this protein is D-alanine--D-alanine ligase.